The following is a 1004-amino-acid chain: RIRYKGIVCDRCGVEVTSSKVRRERMGHIELAAPVTHIWYFKGIPSRMGLILDMSPRSLEEIIYFASYVVINPGNTPLEKKQLITEAEYRQYQDQYGTDTFDAKMGAEAIKELLAEVDLEKHAKELKNELKDATGQKRTRAVRRLDIVEAFIQSGNKPEWMVMDVVPVIPPDLRPMVQLEGGRFATSDLNDLYRRVINRNNRLKRLLDLNAPGIIVQNEKRMLQEAVDALIDNGRRGRPVSGPGNRPLKSLSHLLKGKQGRFRQNLLGKRVDYSGRSVIDVGPFLKMNQMGLPRQMAVELFKPFIYNRLIELGTENGGANNLRSARRLVERHEDVVQDVLEEVVKEHPVLLNRAPTLHRLGIQAFEPVLVSGKAMRLHPLVTTAYNADFDGDQMAIHVPLSDEAQAEARLLMLAASHILAPKDGKPIVAPSQDMTIGNYYLTTEEAGIKGEGMIFSSADEVKMALQNHEVELHTRIGIAASSFDKAKPFTDHQRARIMVTTVGKVIFNEILPDDFPYINEPKSENFNGIDGRFFLDPGTDIVGWFKNESLNGPFKSGFLSDIIAQIYARYQVTRTSVLLDDMKDLGYNISTRSGLTVRMSDVTELPEKGEVLKEAHEKVAKITKQFRRGLLTDDERYIQVTQTWSDAQDKIKSMLIASFDSKNPIFMMSDSGARGNISNSFQLAGMRGLMAAPNGKVIELPVTANFREGLCVLEMFISTHGARKGMTDTALKTANSGYLTRRLVDVAQEVIVREEDCGTDRGLDVSAIMDGNEVIEPLYDRILGRYAMKPVIDPKTGEVIAKKNQMIDEHVADQIIDAGIQTVTIRSIFTCRTEHGVCVKCYGRNMATGDIVEVGEAVGTVAAQSIGEPGTQLTMRTFHTGGVALSEDITQGLPRVQEIFEARNPKGRAEISEVTGKVTSIEENPADRTKTVTIEGETDTREYVLPISARLRVAEGDEIHRSEAINEGPLDPKELIKVSSTLKTENYMLAEVRKVYRMQGVGIA.

Mg(2+) contacts are provided by Asp388, Asp390, and Asp392. Positions 757, 831, 838, and 841 each coordinate Zn(2+).

This sequence belongs to the RNA polymerase beta' chain family. The RNAP catalytic core consists of 2 alpha, 1 beta, 1 beta' and 1 omega subunit. When a sigma factor is associated with the core the holoenzyme is formed, which can initiate transcription. Requires Mg(2+) as cofactor. The cofactor is Zn(2+).

The catalysed reaction is RNA(n) + a ribonucleoside 5'-triphosphate = RNA(n+1) + diphosphate. Its function is as follows. DNA-dependent RNA polymerase catalyzes the transcription of DNA into RNA using the four ribonucleoside triphosphates as substrates. The polypeptide is DNA-directed RNA polymerase subunit beta' (Oenococcus oeni (Leuconostoc oenos)).